Reading from the N-terminus, the 149-residue chain is Ribosome-binding factor A (149 aa).

A disordered region spans residues 123-149 (LAKLREGAAPAGDADPYKTSSKSESEE).

Belongs to the RbfA family. Monomer. Binds 30S ribosomal subunits, but not 50S ribosomal subunits or 70S ribosomes.

The protein localises to the cytoplasm. Functionally, one of several proteins that assist in the late maturation steps of the functional core of the 30S ribosomal subunit. Associates with free 30S ribosomal subunits (but not with 30S subunits that are part of 70S ribosomes or polysomes). Required for efficient processing of 16S rRNA. May interact with the 5'-terminal helix region of 16S rRNA. This chain is Ribosome-binding factor A, found in Corynebacterium glutamicum (strain ATCC 13032 / DSM 20300 / JCM 1318 / BCRC 11384 / CCUG 27702 / LMG 3730 / NBRC 12168 / NCIMB 10025 / NRRL B-2784 / 534).